The chain runs to 879 residues: Alanine--tRNA ligase (879 aa).

The interval 426 to 449 (KQKERARNARGNMDGESWKEDPLS) is disordered. Residues His-566, His-570, Cys-668, and His-672 each contribute to the Zn(2+) site.

The protein belongs to the class-II aminoacyl-tRNA synthetase family. Zn(2+) is required as a cofactor.

It localises to the cytoplasm. The enzyme catalyses tRNA(Ala) + L-alanine + ATP = L-alanyl-tRNA(Ala) + AMP + diphosphate. Its function is as follows. Catalyzes the attachment of alanine to tRNA(Ala) in a two-step reaction: alanine is first activated by ATP to form Ala-AMP and then transferred to the acceptor end of tRNA(Ala). Also edits incorrectly charged Ser-tRNA(Ala) and Gly-tRNA(Ala) via its editing domain. The protein is Alanine--tRNA ligase of Clostridioides difficile (strain 630) (Peptoclostridium difficile).